The primary structure comprises 366 residues: Cobalt-precorrin-5B C(1)-methyltransferase (366 aa).

Belongs to the CbiD family.

The enzyme catalyses Co-precorrin-5B + S-adenosyl-L-methionine = Co-precorrin-6A + S-adenosyl-L-homocysteine. It functions in the pathway cofactor biosynthesis; adenosylcobalamin biosynthesis; cob(II)yrinate a,c-diamide from sirohydrochlorin (anaerobic route): step 6/10. In terms of biological role, catalyzes the methylation of C-1 in cobalt-precorrin-5B to form cobalt-precorrin-6A. In Pseudomonas aeruginosa (strain UCBPP-PA14), this protein is Cobalt-precorrin-5B C(1)-methyltransferase.